A 106-amino-acid polypeptide reads, in one-letter code: uncharacterized protein (106 aa).

The next 2 helical transmembrane spans lie at 43-63 (CSTI…LAIV) and 86-106 (IPEL…FSLF).

The protein resides in the membrane. This is an uncharacterized protein from Saccharomyces cerevisiae (strain ATCC 204508 / S288c) (Baker's yeast).